The following is a 318-amino-acid chain: Galactinol synthase 1 (318 aa).

Residue Lys102 is part of the active site. Positions 118, 120, and 244 each coordinate Mn(2+).

The protein belongs to the glycosyltransferase 8 family. Galactosyltransferase subfamily. A divalent metal cation is required as a cofactor. As to expression, expressed in seeds, mostly in radicle tips.

The protein localises to the cytoplasm. It catalyses the reaction myo-inositol + UDP-alpha-D-galactose = alpha-D-galactosyl-(1-&gt;3)-1D-myo-inositol + UDP + H(+). Functionally, galactinol synthase involved in the biosynthesis of raffinose family oligosaccharides (RFOs) that function as osmoprotectants. May promote plant stress tolerance. This chain is Galactinol synthase 1 (GOLS1), found in Solanum lycopersicum (Tomato).